We begin with the raw amino-acid sequence, 89 residues long: Small ribosomal subunit protein uS15 (89 aa).

This sequence belongs to the universal ribosomal protein uS15 family. In terms of assembly, part of the 30S ribosomal subunit. Forms a bridge to the 50S subunit in the 70S ribosome, contacting the 23S rRNA.

Its function is as follows. One of the primary rRNA binding proteins, it binds directly to 16S rRNA where it helps nucleate assembly of the platform of the 30S subunit by binding and bridging several RNA helices of the 16S rRNA. In terms of biological role, forms an intersubunit bridge (bridge B4) with the 23S rRNA of the 50S subunit in the ribosome. This chain is Small ribosomal subunit protein uS15, found in Shewanella woodyi (strain ATCC 51908 / MS32).